Reading from the N-terminus, the 380-residue chain is Cytosolic acyl coenzyme A thioester hydrolase (380 aa).

The HotDog ACOT-type 1 domain occupies 50–168 (PCGACITGRI…TLWYVPLSLK (119 aa)). The active site involves Asn-66. Lys-168 and Lys-198 each carry N6-acetyllysine. The region spanning 224-338 (SYSQSSLIHL…FFTYVSLSQE (115 aa)) is the HotDog ACOT-type 2 domain. Asp-255 is a catalytic residue. Lys-283 bears the N6-acetyllysine mark. The disordered stretch occupies residues 350–380 (ETEDEKKRFEEGKGRYLQMKAKRQGHAEPQP). Residues 353-363 (DEKKRFEEGKG) are compositionally biased toward basic and acidic residues.

In terms of assembly, homohexamer. In terms of tissue distribution, isoform 4 is expressed exclusively in brain.

Its subcellular location is the cytoplasm. It localises to the cytosol. The protein resides in the mitochondrion. It carries out the reaction hexadecanoyl-CoA + H2O = hexadecanoate + CoA + H(+). It catalyses the reaction octanoyl-CoA + H2O = octanoate + CoA + H(+). The catalysed reaction is dodecanoyl-CoA + H2O = dodecanoate + CoA + H(+). The enzyme catalyses (9Z)-octadecenoyl-CoA + H2O = (9Z)-octadecenoate + CoA + H(+). It carries out the reaction tetradecanoyl-CoA + H2O = tetradecanoate + CoA + H(+). It catalyses the reaction decanoyl-CoA + H2O = decanoate + CoA + H(+). The catalysed reaction is octadecanoyl-CoA + H2O = octadecanoate + CoA + H(+). It functions in the pathway lipid metabolism; fatty acid metabolism. In terms of biological role, catalyzes the hydrolysis of acyl-CoAs into free fatty acids and coenzyme A (CoASH), regulating their respective intracellular levels. Preferentially hydrolyzes palmitoyl-CoA, but has a broad specificity acting on other fatty acyl-CoAs with chain-lengths of C8-C18. May play an important physiological function in brain. This Homo sapiens (Human) protein is Cytosolic acyl coenzyme A thioester hydrolase (ACOT7).